Reading from the N-terminus, the 521-residue chain is NADH-quinone oxidoreductase subunit N (521 aa).

The next 14 membrane-spanning stretches (helical) occupy residues 15–35, 43–63, 98–118, 128–148, 150–170, 185–205, 227–247, 261–281, 303–323, 331–351, 363–383, 406–426, 442–462, and 485–505; these read LAPELILAAMFLILIVTDLIL, IIGWLSLAGLLLSLAAVIWRM, LLKIIFLIGTSLVVLLGLGST, AEFYYLLLPAAAGAMIMASSG, LVTLYIGLELLSITTYVLVGL, VVTGGIASAFVLFGMSYLYGV, ALVYVGFFFLIAGFGIKIAAA, PTPVSAFLAVIAKGAALAAVF, VFFALLVIAAAAMIAGTVSAL, LLALSGVANAGYLLVPIAISV, VFYLVAYLLMNVGAFAVVTVI, AAAMLIFILSFSGLPVTAGFF, WLVAIMVVSTVISYYFYFGII, and TVIWICAAATVALGVLPGPLM.

Belongs to the complex I subunit 2 family. As to quaternary structure, NDH-1 is composed of 14 different subunits. Subunits NuoA, H, J, K, L, M, N constitute the membrane sector of the complex.

Its subcellular location is the cell membrane. It catalyses the reaction a quinone + NADH + 5 H(+)(in) = a quinol + NAD(+) + 4 H(+)(out). NDH-1 shuttles electrons from NADH, via FMN and iron-sulfur (Fe-S) centers, to quinones in the respiratory chain. The immediate electron acceptor for the enzyme in this species is believed to be a menaquinone. Couples the redox reaction to proton translocation (for every two electrons transferred, four hydrogen ions are translocated across the cytoplasmic membrane), and thus conserves the redox energy in a proton gradient. In Paenibacillus sp. (strain JDR-2), this protein is NADH-quinone oxidoreductase subunit N.